Consider the following 308-residue polypeptide: Oxygen-dependent coproporphyrinogen-III oxidase (308 aa).

S100 contacts substrate. Positions 104 and 114 each coordinate a divalent metal cation. H114 serves as the catalytic Proton donor. Substrate is bound at residue 116–118 (NFR). Residues H153 and H183 each coordinate a divalent metal cation. The tract at residues 248-283 (YVEFNLVFDRGTIFGLQSGGRTESILSSMPPMATWK) is important for dimerization. Substrate is bound at residue 266-268 (GGR).

It belongs to the aerobic coproporphyrinogen-III oxidase family. Homodimer. A divalent metal cation is required as a cofactor.

It localises to the cytoplasm. It catalyses the reaction coproporphyrinogen III + O2 + 2 H(+) = protoporphyrinogen IX + 2 CO2 + 2 H2O. It functions in the pathway porphyrin-containing compound metabolism; protoporphyrin-IX biosynthesis; protoporphyrinogen-IX from coproporphyrinogen-III (O2 route): step 1/1. Involved in the heme biosynthesis. Catalyzes the aerobic oxidative decarboxylation of propionate groups of rings A and B of coproporphyrinogen-III to yield the vinyl groups in protoporphyrinogen-IX. The protein is Oxygen-dependent coproporphyrinogen-III oxidase of Francisella tularensis subsp. holarctica (strain OSU18).